Reading from the N-terminus, the 362-residue chain is UDP-N-acetylglucosamine--N-acetylmuramyl-(pentapeptide) pyrophosphoryl-undecaprenol N-acetylglucosamine transferase (362 aa).

Residues 11–13 (TGG), N124, R163, S191, I246, and Q291 contribute to the UDP-N-acetyl-alpha-D-glucosamine site.

The protein belongs to the glycosyltransferase 28 family. MurG subfamily.

It localises to the cell inner membrane. It catalyses the reaction di-trans,octa-cis-undecaprenyl diphospho-N-acetyl-alpha-D-muramoyl-L-alanyl-D-glutamyl-meso-2,6-diaminopimeloyl-D-alanyl-D-alanine + UDP-N-acetyl-alpha-D-glucosamine = di-trans,octa-cis-undecaprenyl diphospho-[N-acetyl-alpha-D-glucosaminyl-(1-&gt;4)]-N-acetyl-alpha-D-muramoyl-L-alanyl-D-glutamyl-meso-2,6-diaminopimeloyl-D-alanyl-D-alanine + UDP + H(+). Its pathway is cell wall biogenesis; peptidoglycan biosynthesis. In terms of biological role, cell wall formation. Catalyzes the transfer of a GlcNAc subunit on undecaprenyl-pyrophosphoryl-MurNAc-pentapeptide (lipid intermediate I) to form undecaprenyl-pyrophosphoryl-MurNAc-(pentapeptide)GlcNAc (lipid intermediate II). The protein is UDP-N-acetylglucosamine--N-acetylmuramyl-(pentapeptide) pyrophosphoryl-undecaprenol N-acetylglucosamine transferase of Idiomarina loihiensis (strain ATCC BAA-735 / DSM 15497 / L2-TR).